The following is a 159-amino-acid chain: 2-C-methyl-D-erythritol 2,4-cyclodiphosphate synthase (159 aa).

Asp8 and His10 together coordinate a divalent metal cation. 4-CDP-2-C-methyl-D-erythritol 2-phosphate contacts are provided by residues 8 to 10 and 34 to 35; these read DVH and HS. Position 42 (His42) interacts with a divalent metal cation. 4-CDP-2-C-methyl-D-erythritol 2-phosphate contacts are provided by residues 56–58, 61–65, 100–106, 132–135, Phe139, and Arg142; these read DIG, FPDTD, AQAPKML, and TTTE.

This sequence belongs to the IspF family. As to quaternary structure, homotrimer. A divalent metal cation is required as a cofactor.

The catalysed reaction is 4-CDP-2-C-methyl-D-erythritol 2-phosphate = 2-C-methyl-D-erythritol 2,4-cyclic diphosphate + CMP. Its pathway is isoprenoid biosynthesis; isopentenyl diphosphate biosynthesis via DXP pathway; isopentenyl diphosphate from 1-deoxy-D-xylulose 5-phosphate: step 4/6. Functionally, involved in the biosynthesis of isopentenyl diphosphate (IPP) and dimethylallyl diphosphate (DMAPP), two major building blocks of isoprenoid compounds. Catalyzes the conversion of 4-diphosphocytidyl-2-C-methyl-D-erythritol 2-phosphate (CDP-ME2P) to 2-C-methyl-D-erythritol 2,4-cyclodiphosphate (ME-CPP) with a corresponding release of cytidine 5-monophosphate (CMP). This chain is 2-C-methyl-D-erythritol 2,4-cyclodiphosphate synthase, found in Citrobacter koseri (strain ATCC BAA-895 / CDC 4225-83 / SGSC4696).